The sequence spans 292 residues: Protease HtpX (292 aa).

Helical transmembrane passes span 4–24 and 32–52; these read IILFLLTNLAVMLTFSLILAV and IYGLLIMSSLFGFSGSILSLI. A Zn(2+)-binding site is contributed by H139. The active site involves E140. H143 is a binding site for Zn(2+). Transmembrane regions (helical) follow at residues 150-170 and 193-213; these read ITMTLVQGVVNTFVIFISRII and FLFFLISTFLEIIFGVLASII. Zn(2+) is bound at residue E222.

The protein belongs to the peptidase M48B family. Zn(2+) is required as a cofactor.

Its subcellular location is the cell membrane. This Buchnera aphidicola subsp. Schizaphis graminum (strain Sg) protein is Protease HtpX.